The primary structure comprises 392 residues: uncharacterized protein (392 aa).

The protein belongs to the mimivirus L17x/L18x family.

This is an uncharacterized protein from Acanthamoeba polyphaga (Amoeba).